A 193-amino-acid polypeptide reads, in one-letter code: Holliday junction branch migration complex subunit RuvA (193 aa).

Residues 1-64 (MIGRIAGTLI…EDAHLLYGFG (64 aa)) form a domain I region. A domain II region spans residues 65–143 (TASERNTFRE…AELGHVPGTP (79 aa)). The interval 144-151 (AVPDSAVD) is flexible linker. Residues 151–193 (DVLNALLALGYSEKEAAAAIKQVPAGTGVSDGIKLALKALSKA) form a domain III region.

It belongs to the RuvA family. In terms of assembly, homotetramer. Forms an RuvA(8)-RuvB(12)-Holliday junction (HJ) complex. HJ DNA is sandwiched between 2 RuvA tetramers; dsDNA enters through RuvA and exits via RuvB. An RuvB hexamer assembles on each DNA strand where it exits the tetramer. Each RuvB hexamer is contacted by two RuvA subunits (via domain III) on 2 adjacent RuvB subunits; this complex drives branch migration. In the full resolvosome a probable DNA-RuvA(4)-RuvB(12)-RuvC(2) complex forms which resolves the HJ.

Its subcellular location is the cytoplasm. In terms of biological role, the RuvA-RuvB-RuvC complex processes Holliday junction (HJ) DNA during genetic recombination and DNA repair, while the RuvA-RuvB complex plays an important role in the rescue of blocked DNA replication forks via replication fork reversal (RFR). RuvA specifically binds to HJ cruciform DNA, conferring on it an open structure. The RuvB hexamer acts as an ATP-dependent pump, pulling dsDNA into and through the RuvAB complex. HJ branch migration allows RuvC to scan DNA until it finds its consensus sequence, where it cleaves and resolves the cruciform DNA. This chain is Holliday junction branch migration complex subunit RuvA, found in Cupriavidus necator (strain ATCC 17699 / DSM 428 / KCTC 22496 / NCIMB 10442 / H16 / Stanier 337) (Ralstonia eutropha).